Here is a 482-residue protein sequence, read N- to C-terminus: O-acyltransferase ausP (482 aa).

Residues His-180 and Asp-412 each act as proton acceptor in the active site.

The protein belongs to the plant acyltransferase family. As to quaternary structure, monomer.

The protein operates within secondary metabolite biosynthesis; terpenoid biosynthesis. Its function is as follows. O-acyltransferase; part of the gene cluster B that mediates the biosynthesis of the fungal meroterpenoid acetoxydehydroaustin. The first step of the pathway is the synthesis of 3,5-dimethylorsellinic acid by the polyketide synthase ausA. 3,5-dimethylorsellinic acid is then prenylated by the polyprenyl transferase ausN. Further epoxidation by the FAD-dependent monooxygenase ausM and cyclization by the probable terpene cyclase ausL lead to the formation of protoaustinoid A. Protoaustinoid A is then oxidized to spiro-lactone preaustinoid A3 by the combined action of the FAD-binding monooxygenases ausB and ausC, and the dioxygenase ausE. Acid-catalyzed keto-rearrangement and ring contraction of the tetraketide portion of preaustinoid A3 by ausJ lead to the formation of preaustinoid A4. The aldo-keto reductase ausK, with the help of ausH, is involved in the next step by transforming preaustinoid A4 into isoaustinone which is in turn hydroxylated by the P450 monooxygenase ausI to form austinolide. The cytochrome P450 monooxygenase ausG then modifies austinolide to austinol. Austinol is further acetylated to austin by the O-acetyltransferase ausP, which spontaneously changes to dehydroaustin. The cytochrome P450 monooxygenase then converts dehydroaustin is into 7-dehydrodehydroaustin. The hydroxylation catalyzed by ausR permits the second O-acetyltransferase ausQ to add an additional acetyl group to the molecule, leading to the formation of acetoxydehydroaustin. Due to genetic rearrangements of the clusters and the subsequent loss of some enzymes, the end product of the Penicillium brasilianum austinoid biosynthesis clusters is acetoxydehydroaustin. This Penicillium brasilianum protein is O-acyltransferase ausP.